Here is a 232-residue protein sequence, read N- to C-terminus: Putative uridine kinase DAS2 (232 aa).

17–24 contributes to the ATP binding site; it reads GGHATGVG.

The protein belongs to the uridine kinase family.

The protein resides in the cytoplasm. The protein localises to the nucleus. The enzyme catalyses uridine + ATP = UMP + ADP + H(+). The catalysed reaction is cytidine + ATP = CMP + ADP + H(+). Its pathway is pyrimidine metabolism; CTP biosynthesis via salvage pathway; CTP from cytidine: step 1/3. It functions in the pathway pyrimidine metabolism; UMP biosynthesis via salvage pathway; UMP from uridine: step 1/1. Its function is as follows. Putative uridine kinase identified in a screen for mutants with increased levels of rDNA transcription. The protein is Putative uridine kinase DAS2 (DAS2) of Saccharomyces cerevisiae (strain ATCC 204508 / S288c) (Baker's yeast).